Consider the following 367-residue polypeptide: Glutamate 5-kinase (367 aa).

Lys10 is an ATP binding site. Residues Ser50, Asp137, and Asn149 each contribute to the substrate site. ATP-binding positions include 169–170 and 211–217; these read TD and TGGMATK. The PUA domain maps to 275–353; it reads AGELVVDDGA…QQIGEILGYE (79 aa).

The protein belongs to the glutamate 5-kinase family.

It localises to the cytoplasm. The enzyme catalyses L-glutamate + ATP = L-glutamyl 5-phosphate + ADP. It participates in amino-acid biosynthesis; L-proline biosynthesis; L-glutamate 5-semialdehyde from L-glutamate: step 1/2. Its function is as follows. Catalyzes the transfer of a phosphate group to glutamate to form L-glutamate 5-phosphate. This chain is Glutamate 5-kinase, found in Erwinia tasmaniensis (strain DSM 17950 / CFBP 7177 / CIP 109463 / NCPPB 4357 / Et1/99).